The primary structure comprises 243 residues: Adenylate kinase 4 (243 aa).

An ATP-binding site is contributed by 40-45 (GSGKGT). The segment at 60-89 (ATGDMLRAAVAAKTPLGVKAKEAMDKGELV) is NMP. Residues threonine 61, arginine 66, 87-89 (ELV), 115-118 (GFPR), and glutamine 122 contribute to the AMP site. Residues 156–193 (GRWIHPSSGRSYHTKFAPPKVPGVDDVTGEPLIQRKDD) are LID. Arginine 157 lines the ATP pocket. AMP is bound by residues arginine 190 and arginine 201.

Belongs to the adenylate kinase family.

Its subcellular location is the cytoplasm. The catalysed reaction is AMP + ATP = 2 ADP. Catalyzes the reversible transfer of the terminal phosphate group between ATP and AMP. Plays an important role in cellular energy homeostasis and in adenine nucleotide metabolism. In Oryza sativa subsp. japonica (Rice), this protein is Adenylate kinase 4 (ADK-B).